Here is a 189-residue protein sequence, read N- to C-terminus: Large ribosomal subunit protein uL5 (189 aa).

This sequence belongs to the universal ribosomal protein uL5 family. Part of the 50S ribosomal subunit; part of the 5S rRNA/L5/L18/L25 subcomplex. Contacts the 5S rRNA and the P site tRNA. Forms a bridge to the 30S subunit in the 70S ribosome.

In terms of biological role, this is one of the proteins that bind and probably mediate the attachment of the 5S RNA into the large ribosomal subunit, where it forms part of the central protuberance. In the 70S ribosome it contacts protein S13 of the 30S subunit (bridge B1b), connecting the 2 subunits; this bridge is implicated in subunit movement. Contacts the P site tRNA; the 5S rRNA and some of its associated proteins might help stabilize positioning of ribosome-bound tRNAs. The sequence is that of Large ribosomal subunit protein uL5 from Kineococcus radiotolerans (strain ATCC BAA-149 / DSM 14245 / SRS30216).